Consider the following 146-residue polypeptide: Globin-2B (146 aa).

In terms of domain architecture, Globin spans 9 to 146 (QLTADVKKDL…KLVGVVQAAL (138 aa)). A heme b-binding site is contributed by His-101.

This sequence belongs to the globin family. In terms of assembly, homodimer.

The chain is Globin-2B from Anadara trapezia (Sydney cockle).